A 337-amino-acid chain; its full sequence is Biotin synthase (337 aa).

The Radical SAM core domain maps to 58–283 (EDVEVEGIVS…RTVLRYAGGR (226 aa)). [4Fe-4S] cluster is bound by residues cysteine 73, cysteine 77, and cysteine 80. Cysteine 116, cysteine 149, cysteine 208, and arginine 278 together coordinate [2Fe-2S] cluster.

This sequence belongs to the radical SAM superfamily. Biotin synthase family. As to quaternary structure, homodimer. It depends on [4Fe-4S] cluster as a cofactor. The cofactor is [2Fe-2S] cluster.

The catalysed reaction is (4R,5S)-dethiobiotin + (sulfur carrier)-SH + 2 reduced [2Fe-2S]-[ferredoxin] + 2 S-adenosyl-L-methionine = (sulfur carrier)-H + biotin + 2 5'-deoxyadenosine + 2 L-methionine + 2 oxidized [2Fe-2S]-[ferredoxin]. It participates in cofactor biosynthesis; biotin biosynthesis; biotin from 7,8-diaminononanoate: step 2/2. Functionally, catalyzes the conversion of dethiobiotin (DTB) to biotin by the insertion of a sulfur atom into dethiobiotin via a radical-based mechanism. The protein is Biotin synthase of Pseudarthrobacter chlorophenolicus (strain ATCC 700700 / DSM 12829 / CIP 107037 / JCM 12360 / KCTC 9906 / NCIMB 13794 / A6) (Arthrobacter chlorophenolicus).